We begin with the raw amino-acid sequence, 493 residues long: (+)-menthofuran synthase (493 aa).

Position 1 (M1) is a topological domain, cytoplasmic. Residues 2-19 (AALLVFFSVSLILLAVLF) traverse the membrane as a helical; Signal-anchor for type II membrane protein segment. Topologically, residues 20–493 (HKRKSSLSSR…LLVLATPRQS (474 aa)) are lumenal. Residue N169 is glycosylated (N-linked (GlcNAc...) asparagine). C434 lines the heme pocket.

It belongs to the cytochrome P450 family. Requires heme as cofactor.

It is found in the membrane. The catalysed reaction is (R)-pulegone + reduced [NADPH--hemoprotein reductase] + O2 = (R)-menthofuran + oxidized [NADPH--hemoprotein reductase] + 2 H2O + H(+). It participates in secondary metabolite biosynthesis; terpenoid biosynthesis. In terms of biological role, monoterpene synthase that catalyzes the formation of (+)-menthofuran from (+)-pulegone. This chain is (+)-menthofuran synthase, found in Mentha piperita (Peppermint).